The sequence spans 128 residues: uncharacterized protein (128 aa).

3 helical membrane passes run 30–50, 65–85, and 93–113; these read ILFTILSVAIIMVAFDSLGSS, VFRGNTAKGIAVVGIIVLGIQ, and WEVALVVVTAIIILFKAPDIV.

It is found in the cell membrane. This is an uncharacterized protein from Rickettsia prowazekii (strain Madrid E).